We begin with the raw amino-acid sequence, 638 residues long: Zinc finger and BTB domain-containing protein 22 (638 aa).

A BTB domain is found at 57–121; that stretch reads CDVSIRVQGR…AYTGRLSMAA (65 aa). Disordered stretches follow at residues 171–223, 229–248, 335–354, and 367–451; these read CASV…STSQ, SAAG…APVV, DDED…GEPE, and EPAD…HGAV. Residues 189–210 are compositionally biased toward polar residues; that stretch reads SVRSHTSSRASENQSPSSSNYF. Phosphoserine is present on Ser-203. The C2H2-type 1; atypical zinc-finger motif lies at 483–504; the sequence is FLCHCGKAFSHKSMRDRHVNMH. 2 C2H2-type zinc fingers span residues 510-532 and 538-559; these read FDCP…MKTH and YECS…HRGH. Residues 564 to 638 are disordered; sequence HRMGVGGVGS…DFSGGGGAAH (75 aa).

It belongs to the krueppel C2H2-type zinc-finger protein family.

It is found in the nucleus. Its function is as follows. May be involved in transcriptional regulation. The polypeptide is Zinc finger and BTB domain-containing protein 22 (Zbtb22) (Mus musculus (Mouse)).